A 514-amino-acid polypeptide reads, in one-letter code: Protein Tube (514 aa).

5 disordered regions span residues 226 to 250 (VPQQ…RSSR), 255 to 274 (TASN…SNTA), 324 to 343 (LDAG…STST), 366 to 385 (ASDA…VPDM), and 413 to 514 (NGAK…ELQQ). Low complexity predominate over residues 259–274 (VAPTTASNAPSASNTA). Polar residues predominate over residues 422-433 (ADNNSSGTNSLS). The segment covering 434-460 (NDDDEQKEDDDDDDDDDVVDVDDEEAD) has biased composition (acidic residues). The span at 477 to 514 (TTVTCTSGENSFEFTNDSSSASNDDYTNNIPNLSELQQ) shows a compositional bias: polar residues.

In terms of tissue distribution, maternal and zygotic gene product.

The protein resides in the cytoplasm. Required for the determination of embryonic dorsoventral polarity. Is involved in transduction of information regulating nuclear import of dorsal protein. The chain is Protein Tube (tub) from Drosophila virilis (Fruit fly).